Here is a 571-residue protein sequence, read N- to C-terminus: Proline--tRNA ligase (571 aa).

It belongs to the class-II aminoacyl-tRNA synthetase family. ProS type 1 subfamily. Homodimer.

Its subcellular location is the cytoplasm. The enzyme catalyses tRNA(Pro) + L-proline + ATP = L-prolyl-tRNA(Pro) + AMP + diphosphate. Its function is as follows. Catalyzes the attachment of proline to tRNA(Pro) in a two-step reaction: proline is first activated by ATP to form Pro-AMP and then transferred to the acceptor end of tRNA(Pro). As ProRS can inadvertently accommodate and process non-cognate amino acids such as alanine and cysteine, to avoid such errors it has two additional distinct editing activities against alanine. One activity is designated as 'pretransfer' editing and involves the tRNA(Pro)-independent hydrolysis of activated Ala-AMP. The other activity is designated 'posttransfer' editing and involves deacylation of mischarged Ala-tRNA(Pro). The misacylated Cys-tRNA(Pro) is not edited by ProRS. The chain is Proline--tRNA ligase from Glaesserella parasuis serovar 5 (strain SH0165) (Haemophilus parasuis).